We begin with the raw amino-acid sequence, 300 residues long: Protoheme IX farnesyltransferase 1 (300 aa).

9 helical membrane passes run 28–48, 54–74, 100–120, 122–142, 149–169, 176–196, 222–242, 243–263, and 280–300; these read VVALMLLTVLVGMCLAMPTIL, VAGLLGIAMMAGSAAALNHLI, ALLFAALLGCLGFVILYVFTN, LTAWLTFASLIGYALIYTAYL, NIVIGGLAGAMPPLLGWTAVT, ALLLVIIIFLWTPPHFWALAI, CILLYTILLAMACLLPVLVGM, SGPLYFVCSSLLSTGFIYKAW, and FSIYHLMLLFMALLLDHYLWA.

The protein belongs to the UbiA prenyltransferase family. Protoheme IX farnesyltransferase subfamily.

Its subcellular location is the cell inner membrane. The enzyme catalyses heme b + (2E,6E)-farnesyl diphosphate + H2O = Fe(II)-heme o + diphosphate. It functions in the pathway porphyrin-containing compound metabolism; heme O biosynthesis; heme O from protoheme: step 1/1. Functionally, converts heme B (protoheme IX) to heme O by substitution of the vinyl group on carbon 2 of heme B porphyrin ring with a hydroxyethyl farnesyl side group. This chain is Protoheme IX farnesyltransferase 1, found in Shewanella sp. (strain ANA-3).